Reading from the N-terminus, the 719-residue chain is Homeobox protein SIX5 (719 aa).

Low complexity-rich tracts occupy residues M1–T22 and Q31–S65. Disordered stretches follow at residues M1–V73 and W241–M287. Positions G194–T253 form a DNA-binding region, homeobox. Basic and acidic residues predominate over residues E272 to R282.

This sequence belongs to the SIX/Sine oculis homeobox family. In terms of assembly, probably binds DNA dimer. Interacts with EYA3, and probably EYA1 and EYA2.

Its subcellular location is the nucleus. Transcription factor that is thought to be involved in regulation of organogenesis. May be involved in determination and maintenance of retina formation. Binds a 5'-GGTGTCAG-3' motif present in the ARE regulatory element of ATP1A1. Binds a 5'-TCA[AG][AG]TTNC-3' motif present in the MEF3 element in the myogenin promoter, and in the IGFBP5 promoter. Thought to be regulated by association with Dach and Eya proteins, and seems to be coactivated by EYA1, EYA2 and EYA3. This chain is Homeobox protein SIX5 (Six5), found in Mus musculus (Mouse).